Reading from the N-terminus, the 138-residue chain is Putative pre-16S rRNA nuclease (138 aa).

It belongs to the YqgF nuclease family.

The protein localises to the cytoplasm. Its function is as follows. Could be a nuclease involved in processing of the 5'-end of pre-16S rRNA. This Salmonella dublin (strain CT_02021853) protein is Putative pre-16S rRNA nuclease.